Consider the following 123-residue polypeptide: Large ribosomal subunit protein bL17 (123 aa).

It belongs to the bacterial ribosomal protein bL17 family. Part of the 50S ribosomal subunit. Contacts protein L32.

The sequence is that of Large ribosomal subunit protein bL17 from Borreliella burgdorferi (strain ZS7) (Borrelia burgdorferi).